The chain runs to 158 residues: Putative cTAGE family member 3 (158 aa).

The stretch at 26 to 96 (QLQESQKQLL…AAVLEEDITD (71 aa)) forms a coiled coil.

The protein belongs to the cTAGE family. In terms of tissue distribution, expressed in normal tissues including colon, mammary gland, ovary, placenta, stomach and testis, as well as several fetal tissues.

Tumor-associated antigen. The polypeptide is Putative cTAGE family member 3 (CTAGE3P) (Homo sapiens (Human)).